Consider the following 138-residue polypeptide: uncharacterized protein (138 aa).

This is an uncharacterized protein from Saccharomyces cerevisiae (strain ATCC 204508 / S288c) (Baker's yeast).